The primary structure comprises 44 residues: Cytochrome b559 subunit beta (44 aa).

A helical membrane pass occupies residues 19 to 35 (WLAIHGIAIPTVFFLGA). Residue His-23 coordinates heme.

The protein belongs to the PsbE/PsbF family. In terms of assembly, heterodimer of an alpha subunit and a beta subunit. PSII is composed of 1 copy each of membrane proteins PsbA, PsbB, PsbC, PsbD, PsbE, PsbF, PsbH, PsbI, PsbJ, PsbK, PsbL, PsbM, PsbT, PsbX, PsbY, PsbZ, Psb30/Ycf12, at least 3 peripheral proteins of the oxygen-evolving complex and a large number of cofactors. It forms dimeric complexes. The cofactor is heme b.

The protein resides in the plastid. The protein localises to the chloroplast thylakoid membrane. In terms of biological role, this b-type cytochrome is tightly associated with the reaction center of photosystem II (PSII). PSII is a light-driven water:plastoquinone oxidoreductase that uses light energy to abstract electrons from H(2)O, generating O(2) and a proton gradient subsequently used for ATP formation. It consists of a core antenna complex that captures photons, and an electron transfer chain that converts photonic excitation into a charge separation. The protein is Cytochrome b559 subunit beta of Gracilaria tenuistipitata var. liui (Red alga).